The following is a 374-amino-acid chain: WW domain-binding protein 4 (374 aa).

The Matrin-type zinc-finger motif lies at 11-42; that stretch reads KFCDYCKCWIADNRPSVEFHERGKNHKENVAR. Over residues 91–109 the composition is skewed to polar residues; sequence EPTISPVTNTVQPTPTANQ. Disordered stretches follow at residues 91 to 126 and 188 to 328; these read EPTI…SKGR and SKWE…EAGA. A compositionally biased stretch (basic residues) spans 112-121; sequence EKKKKKKKKE. WW domains lie at 121 to 154 and 162 to 195; these read EASK…KPEG and TAAK…KPDD. Composition is skewed to basic and acidic residues over residues 188 to 197 and 205 to 270; these read SKWEKPDDFI and SSKD…EKTT. Residues Ser219, Ser226, and Ser228 each carry the phosphoserine modification. The span at 315-325 shows a compositional bias: polar residues; it reads STENECLSSSE. The tract at residues 355-373 is interaction with SNRNP200; it reads KKRRIENGKSRNLRQRGED.

As to quaternary structure, component of the spliceosome B complex. Associated with U2 snRNPs. Binds splicing factors SNRPB, SNRPC and SF1. Interacts via the WW domains with the Pro-rich domains of KHDRBS1/SAM68. Interacts via the WW domains with the Pro-rich domains of WBP11. Interacts with SNRNP200.

It is found in the nucleus. It localises to the nucleus speckle. Its function is as follows. Involved in pre-mRNA splicing as a component of the spliceosome. May play a role in cross-intron bridging of U1 and U2 snRNPs in the mammalian A complex. This chain is WW domain-binding protein 4 (Wbp4), found in Rattus norvegicus (Rat).